Reading from the N-terminus, the 244-residue chain is tRNA pseudouridine synthase A (244 aa).

D52 functions as the Nucleophile in the catalytic mechanism. Y110 serves as a coordination point for substrate.

The protein belongs to the tRNA pseudouridine synthase TruA family. Homodimer.

The enzyme catalyses uridine(38/39/40) in tRNA = pseudouridine(38/39/40) in tRNA. Formation of pseudouridine at positions 38, 39 and 40 in the anticodon stem and loop of transfer RNAs. The sequence is that of tRNA pseudouridine synthase A from Clostridium botulinum (strain Alaska E43 / Type E3).